Here is a 476-residue protein sequence, read N- to C-terminus: Bifunctional protein HldE (476 aa).

The interval 1–319 (MKVSLPAFEK…EALALHHGES (319 aa)) is ribokinase. 195–198 (NMSE) provides a ligand contact to ATP. Residue D264 is part of the active site. A cytidylyltransferase region spans residues 345 to 476 (MTNGCFDILH…AIIQNIMANQ (132 aa)).

It in the N-terminal section; belongs to the carbohydrate kinase PfkB family. The protein in the C-terminal section; belongs to the cytidylyltransferase family. Homodimer.

It catalyses the reaction D-glycero-beta-D-manno-heptose 7-phosphate + ATP = D-glycero-beta-D-manno-heptose 1,7-bisphosphate + ADP + H(+). It carries out the reaction D-glycero-beta-D-manno-heptose 1-phosphate + ATP + H(+) = ADP-D-glycero-beta-D-manno-heptose + diphosphate. The protein operates within nucleotide-sugar biosynthesis; ADP-L-glycero-beta-D-manno-heptose biosynthesis; ADP-L-glycero-beta-D-manno-heptose from D-glycero-beta-D-manno-heptose 7-phosphate: step 1/4. It participates in nucleotide-sugar biosynthesis; ADP-L-glycero-beta-D-manno-heptose biosynthesis; ADP-L-glycero-beta-D-manno-heptose from D-glycero-beta-D-manno-heptose 7-phosphate: step 3/4. In terms of biological role, catalyzes the phosphorylation of D-glycero-D-manno-heptose 7-phosphate at the C-1 position to selectively form D-glycero-beta-D-manno-heptose-1,7-bisphosphate. Functionally, catalyzes the ADP transfer from ATP to D-glycero-beta-D-manno-heptose 1-phosphate, yielding ADP-D-glycero-beta-D-manno-heptose. The protein is Bifunctional protein HldE of Shewanella sp. (strain W3-18-1).